A 654-amino-acid polypeptide reads, in one-letter code: tRNA 5-methylaminomethyl-2-thiouridine biosynthesis bifunctional protein MnmC (654 aa).

The interval 1–235 (MSDFQHAQLD…KREMLGGTYQ (235 aa)) is tRNA (mnm(5)s(2)U34)-methyltransferase. The interval 261–654 (VGGGLAGCAS…LRDLVRGQRG (394 aa)) is FAD-dependent cmnm(5)s(2)U34 oxidoreductase.

In the N-terminal section; belongs to the methyltransferase superfamily. tRNA (mnm(5)s(2)U34)-methyltransferase family. The protein in the C-terminal section; belongs to the DAO family. FAD serves as cofactor.

The protein localises to the cytoplasm. The enzyme catalyses 5-aminomethyl-2-thiouridine(34) in tRNA + S-adenosyl-L-methionine = 5-methylaminomethyl-2-thiouridine(34) in tRNA + S-adenosyl-L-homocysteine + H(+). Catalyzes the last two steps in the biosynthesis of 5-methylaminomethyl-2-thiouridine (mnm(5)s(2)U) at the wobble position (U34) in tRNA. Catalyzes the FAD-dependent demodification of cmnm(5)s(2)U34 to nm(5)s(2)U34, followed by the transfer of a methyl group from S-adenosyl-L-methionine to nm(5)s(2)U34, to form mnm(5)s(2)U34. The chain is tRNA 5-methylaminomethyl-2-thiouridine biosynthesis bifunctional protein MnmC from Pseudomonas aeruginosa (strain UCBPP-PA14).